A 91-amino-acid polypeptide reads, in one-letter code: Cytoplasmic envelopment protein 3 (91 aa).

G2 carries N-myristoyl glycine; by host lipidation. The disordered stretch occupies residues 48–81; sequence NMGTDEYDEEDEGGDGGEGREPQPEVKTTPYPKR. Positions 52–62 are enriched in acidic residues; sequence DEYDEEDEGGD.

This sequence belongs to the herpesviridae cytoplasmic envelopment protein 3 family. As to quaternary structure, interacts with cytoplasmic envelopment protein 2; this interaction is essential for the proper localization of each protein to the assembly complex and thus for the production of infectious virus. Myristoylation and palmitoylation (probably on one or more of the nearby cysteines at the N-terminus) enable membrane-binding and Golgi apparatus-specific targeting and are essential for efficient packaging. In terms of processing, phosphorylated. Phosphorylation does not seem to be required for recycling to the host Golgi apparatus. Packaging is selective for underphosphorylated forms.

The protein localises to the virion tegument. The protein resides in the virion membrane. Its subcellular location is the host cell membrane. It localises to the host Golgi apparatus membrane. Plays an important role in the cytoplasmic envelopment of tegument proteins and capsids during the assembly and egress processes. Also participates in viral entry at the fusion step probably by regulating the core fusion machinery. In Equus caballus (Horse), this protein is Cytoplasmic envelopment protein 3 (38).